The sequence spans 315 residues: Voltage-dependent calcium channel gamma-3 subunit (315 aa).

The next 4 membrane-spanning stretches (helical) occupy residues 8–28, 104–124, 135–155, and 181–201; these read VQML…TIAV, SSVF…CVAA, ILSA…GIIV, and FGAF…HIYI. The interval 232-252 is disordered; it reads RRRSSSRSTEPRSRDLSPISK. Phosphoserine is present on serine 248.

The protein belongs to the PMP-22/EMP/MP20 family. CACNG subfamily. The L-type calcium channel is composed of five subunits: alpha-1, alpha-2/delta, beta and gamma. Acts as an auxiliary subunit for AMPA-selective glutamate receptors (AMPARs). Found in a complex with GRIA1, GRIA2, GRIA3, GRIA4, CNIH2, CNIH3, CACNG2, CACNG4, CACNG5, CACNG7 and CACNG8. Interacts with AP4M1 and GRIA1; associates GRIA1 with the adaptor protein complex 4 (AP-4) to target GRIA1 to the somatodendritic compartment of neurons.

The protein resides in the membrane. Regulates the trafficking and gating properties of AMPA-selective glutamate receptors (AMPARs). Promotes their targeting to the cell membrane and synapses and modulates their gating properties by slowing their rates of activation, deactivation and desensitization. Does not show subunit-specific AMPA receptor regulation and regulates all AMPAR subunits. Thought to stabilize the calcium channel in an inactivated (closed) state. In Bos taurus (Bovine), this protein is Voltage-dependent calcium channel gamma-3 subunit (CACNG3).